The following is a 380-amino-acid chain: Cytochrome b (380 aa).

A run of 4 helical transmembrane segments spans residues 33-53, 77-98, 113-133, and 178-198; these read FGSLLGLCLITQILTGLFLAM, WLIRNIHANGASFFFICIYMHI, WNIGVVLLLLVMMTAFVGYVL, and FFAFHFLLPFIIAAATVIHLL. His83 and His97 together coordinate heme b. The heme b site is built by His182 and His196. Residue His201 coordinates a ubiquinone. The next 4 membrane-spanning stretches (helical) occupy residues 226 to 246, 288 to 308, 320 to 340, and 347 to 367; these read YKDLLGFVIMLLALTLLALFS, LGGVLALLFSILVLMVVPLLH, ITQFLFWTLVADMIILTWIGG, and FIIIGQIASVLYFALFLVLFP.

The protein belongs to the cytochrome b family. As to quaternary structure, the cytochrome bc1 complex contains 3 respiratory subunits (MT-CYB, CYC1 and UQCRFS1), 2 core proteins (UQCRC1 and UQCRC2) and probably 6 low-molecular weight proteins. Heme b serves as cofactor.

Its subcellular location is the mitochondrion inner membrane. In terms of biological role, component of the ubiquinol-cytochrome c reductase complex (complex III or cytochrome b-c1 complex) that is part of the mitochondrial respiratory chain. The b-c1 complex mediates electron transfer from ubiquinol to cytochrome c. Contributes to the generation of a proton gradient across the mitochondrial membrane that is then used for ATP synthesis. The protein is Cytochrome b (mt-cyb) of Carassius auratus (Goldfish).